The primary structure comprises 287 residues: U-megalopygitoxin(8)-Mo12 (287 aa).

The N-terminal stretch at 1–17 (MNLQYLILSLLSTTVYG) is a signal peptide. Residue His284 is modified to Histidine amide.

It belongs to the megalysin family. Contains 2 disulfide bonds. In terms of tissue distribution, expressed by the venom apparatus.

The protein resides in the secreted. Its subcellular location is the target cell membrane. Its function is as follows. May function as a large pore-forming protein. The protein is U-megalopygitoxin(8)-Mo12 of Megalopyge opercularis (Southern flannel moth).